A 344-amino-acid chain; its full sequence is Phenylalanine--tRNA ligase alpha subunit (344 aa).

Glu-259 lines the Mg(2+) pocket.

The protein belongs to the class-II aminoacyl-tRNA synthetase family. Phe-tRNA synthetase alpha subunit type 1 subfamily. As to quaternary structure, tetramer of two alpha and two beta subunits. Requires Mg(2+) as cofactor.

It localises to the cytoplasm. It carries out the reaction tRNA(Phe) + L-phenylalanine + ATP = L-phenylalanyl-tRNA(Phe) + AMP + diphosphate + H(+). This is Phenylalanine--tRNA ligase alpha subunit from Nitrosospira multiformis (strain ATCC 25196 / NCIMB 11849 / C 71).